A 143-amino-acid polypeptide reads, in one-letter code: Cold shock domain-containing protein CG9705 (143 aa).

The disordered stretch occupies residues 1–30; that stretch reads MTEPRTPEKLLAAKPPVLHHNSHSPNASLQ. Residues serine 22, serine 24, serine 28, and serine 33 each carry the phosphoserine modification. The 68-residue stretch at 54–121 folds into the CSD domain; it reads VVTGMVKSFS…KHQAVHVQIS (68 aa). Phosphoserine occurs at positions 139 and 140.

This is Cold shock domain-containing protein CG9705 from Drosophila melanogaster (Fruit fly).